Consider the following 396-residue polypeptide: Elongation factor Tu (396 aa).

A tr-type G domain is found at 10–205; the sequence is KPHVNIGTIG…AVDESIPDPV (196 aa). Residues 19–26 are G1; that stretch reads GHVDHGKT. 19 to 26 is a binding site for GTP; that stretch reads GHVDHGKT. Thr-26 provides a ligand contact to Mg(2+). Residues 62-66 are G2; that stretch reads GITIN. The interval 83 to 86 is G3; the sequence is DAPG. Residues 83–87 and 138–141 each bind GTP; these read DAPGH and NKAD. The tract at residues 138–141 is G4; it reads NKAD. The G5 stretch occupies residues 175–177; the sequence is SAL.

This sequence belongs to the TRAFAC class translation factor GTPase superfamily. Classic translation factor GTPase family. EF-Tu/EF-1A subfamily. Monomer.

The protein resides in the cytoplasm. The catalysed reaction is GTP + H2O = GDP + phosphate + H(+). In terms of biological role, GTP hydrolase that promotes the GTP-dependent binding of aminoacyl-tRNA to the A-site of ribosomes during protein biosynthesis. This Mycobacterium sp. (strain JLS) protein is Elongation factor Tu.